We begin with the raw amino-acid sequence, 984 residues long: Detocs histidine-protein kinase DtcA (984 aa).

His645 bears the Phosphohistidine; by autocatalysis mark.

In terms of processing, autophosphorylated.

The catalysed reaction is ATP + protein L-histidine = ADP + protein N-phospho-L-histidine.. Its function is as follows. Sensor-kinase member of the two-component regulatory system Detocs that confers resistance to bacteriophage. When the system (DtcA-DtcB-DtcC) is expressed in a susceptible E.coli (strain MG1655) it confers resistance to bacteriophages T2, T4, T5, T6 and SECphi27. Detocs inhibits T5 infection leading to growth arrest but not complete cell lysis, during SECphi27 infection leads to cell lysis. DtcA (this subunit) probably autophosphorylates upon sensing viral infection, and subsequently transfers the phosphate signal to DtcC which activates it, leading to an antiviral defense; DtcB may scavenge phosphorylation signals from accidental activation of DtcA. This chain is Detocs histidine-protein kinase DtcA, found in Vibrio alginolyticus.